Reading from the N-terminus, the 143-residue chain is Large ribosomal subunit protein uL11 (143 aa).

The protein belongs to the universal ribosomal protein uL11 family. As to quaternary structure, part of the ribosomal stalk of the 50S ribosomal subunit. Interacts with L10 and the large rRNA to form the base of the stalk. L10 forms an elongated spine to which L12 dimers bind in a sequential fashion forming a multimeric L10(L12)X complex. Post-translationally, one or more lysine residues are methylated.

In terms of biological role, forms part of the ribosomal stalk which helps the ribosome interact with GTP-bound translation factors. The sequence is that of Large ribosomal subunit protein uL11 from Aromatoleum aromaticum (strain DSM 19018 / LMG 30748 / EbN1) (Azoarcus sp. (strain EbN1)).